The primary structure comprises 309 residues: Heme A synthase (309 aa).

The Cytoplasmic portion of the chain corresponds to 1-6 (MTKKLK). The helical transmembrane segment at 7–27 (ILSVISTICMIPLLLGGALVT) threads the bilayer. Residues 28-62 (KTGSADGCGNSWPLCEGQFLPTKISFEMFIELSHR) are Extracellular-facing. A disulfide bridge connects residues Cys-35 and Cys-42. Glu-58 is an active-site residue. His-61 provides a ligand contact to heme o. A helical transmembrane segment spans residues 63 to 83 (GVTGVVGILIVYLTYLVWKEL). The Cytoplasmic portion of the chain corresponds to 84-88 (RHNKE). Residues 89–109 (VVFLAFSALSLMILQALIGAA) form a helical membrane-spanning segment. Residues 110 to 123 (AVVWGQSDFALATH) are Extracellular-facing. Residue His-123 coordinates heme o. The chain crosses the membrane as a helical span at residues 124 to 144 (FGISLVCFAAVFLLMLQLFEI). Residues 145 to 159 (DKKLHTEDIHINKTH) are Cytoplasmic-facing. The chain crosses the membrane as a helical span at residues 160 to 180 (RIEIYAISFYTMCVVYSGALV). The Extracellular segment spans residues 181-211 (RHTDSNLACRDWPLCVNNSSFGISDYNFYQW). Cys-189 and Cys-195 are joined by a disulfide. Residues 212–232 (VQMGHRLAAGILFIWTVILTI) form a helical membrane-spanning segment. His-216 contacts heme b. Topologically, residues 233-247 (RMVKHYKNSKVFYWS) are cytoplasmic. A helical transmembrane segment spans residues 248-268 (WLITLGLITLQVLFGALIIFT). The Extracellular portion of the chain corresponds to 269-271 (SLN). Residues 272–292 (LAIALFHALFITCYFGMLSFF) traverse the membrane as a helical segment. His-278 contributes to the heme b binding site. Residues 293-309 (MHLSFRAKRREKYSNQS) lie on the Cytoplasmic side of the membrane.

The protein belongs to the COX15/CtaA family. Type 1 subfamily. Interacts with CtaB. It depends on heme b as a cofactor.

It localises to the cell membrane. It carries out the reaction Fe(II)-heme o + 2 A + H2O = Fe(II)-heme a + 2 AH2. The protein operates within porphyrin-containing compound metabolism; heme A biosynthesis; heme A from heme O: step 1/1. Catalyzes the conversion of heme O to heme A by two successive hydroxylations of the methyl group at C8. The first hydroxylation forms heme I, the second hydroxylation results in an unstable dihydroxymethyl group, which spontaneously dehydrates, resulting in the formyl group of heme A. The protein is Heme A synthase of Oceanobacillus iheyensis (strain DSM 14371 / CIP 107618 / JCM 11309 / KCTC 3954 / HTE831).